A 72-amino-acid polypeptide reads, in one-letter code: Translation initiation factor IF-1 (72 aa).

The S1-like domain occupies 1–72 (MPKDDSIEVE…TRGRITYRAK (72 aa)).

This sequence belongs to the IF-1 family. As to quaternary structure, component of the 30S ribosomal translation pre-initiation complex which assembles on the 30S ribosome in the order IF-2 and IF-3, IF-1 and N-formylmethionyl-tRNA(fMet); mRNA recruitment can occur at any time during PIC assembly.

The protein localises to the cytoplasm. In terms of biological role, one of the essential components for the initiation of protein synthesis. Stabilizes the binding of IF-2 and IF-3 on the 30S subunit to which N-formylmethionyl-tRNA(fMet) subsequently binds. Helps modulate mRNA selection, yielding the 30S pre-initiation complex (PIC). Upon addition of the 50S ribosomal subunit IF-1, IF-2 and IF-3 are released leaving the mature 70S translation initiation complex. The sequence is that of Translation initiation factor IF-1 from Myxococcus xanthus (strain DK1622).